The chain runs to 419 residues: L-rhamnose isomerase (419 aa).

Residues histidine 262, aspartate 294, and aspartate 296 each coordinate Mn(2+).

Belongs to the rhamnose isomerase family. In terms of assembly, homotetramer. The cofactor is Mn(2+).

It is found in the cytoplasm. The catalysed reaction is L-rhamnopyranose = L-rhamnulose. The protein operates within carbohydrate degradation; L-rhamnose degradation; glycerone phosphate from L-rhamnose: step 1/3. Functionally, catalyzes the interconversion of L-rhamnose and L-rhamnulose. This Salmonella typhi protein is L-rhamnose isomerase.